A 258-amino-acid chain; its full sequence is Shikimate dehydrogenase (NADP(+)) (258 aa).

Shikimate is bound by residues 14-16 (SES) and T61. The active-site Proton acceptor is the K65. Residues N86 and D101 each contribute to the shikimate site. NADP(+) contacts are provided by residues 125-129 (GSGGS) and L211. Y213 lines the shikimate pocket. An NADP(+)-binding site is contributed by G234.

This sequence belongs to the shikimate dehydrogenase family. As to quaternary structure, homodimer.

It carries out the reaction shikimate + NADP(+) = 3-dehydroshikimate + NADPH + H(+). It participates in metabolic intermediate biosynthesis; chorismate biosynthesis; chorismate from D-erythrose 4-phosphate and phosphoenolpyruvate: step 4/7. In terms of biological role, involved in the biosynthesis of the chorismate, which leads to the biosynthesis of aromatic amino acids. Catalyzes the reversible NADPH linked reduction of 3-dehydroshikimate (DHSA) to yield shikimate (SA). The sequence is that of Shikimate dehydrogenase (NADP(+)) from Clostridium botulinum (strain 657 / Type Ba4).